The primary structure comprises 205 residues: MSKASFLREYKIVIVGGGGVGKSALTIQFIQSHFVDEYDPTIEDSYRKQCVIDDETALLDVLDTAGQEEYSAMREQYMRNGEGFVLVYSITSRLSFEEVNTFYQQIRRVKDRDSFPMVLVGNKCDLEGDRQVSSQEGRDLAKSFGCPFSETSAKQRIRVDDTFYEVVREIRRMNKEQEGRSKGGQREAFEMSDTRNDGCCGCILM.

16-23 (GGGGVGKS) serves as a coordination point for GTP. Positions 38–46 (YDPTIEDSY) match the Effector region motif. GTP is bound by residues 63–67 (DTAGQ) and 122–125 (NKCD). The residue at position 202 (C202) is a Cysteine methyl ester. The S-farnesyl cysteine moiety is linked to residue C202. The propeptide at 203–205 (ILM) is removed in mature form.

This sequence belongs to the small GTPase superfamily. Ras family.

The protein localises to the cell membrane. It carries out the reaction GTP + H2O = GDP + phosphate + H(+). Its activity is regulated as follows. Alternates between an inactive form bound to GDP and an active form bound to GTP. Activated by a guanine nucleotide-exchange factor (GEF) and inactivated by a GTPase-activating protein (GAP). In Mucor circinelloides f. lusitanicus (Mucor racemosus var. lusitanicus), this protein is Ras-like protein 3 (RAS3).